Consider the following 305-residue polypeptide: Transcription factor bHLH18 (305 aa).

The interval 41 to 67 is disordered; sequence LKTTHISPNLHPFSSSNPPPPKHQPSS. Over residues 44–56 the composition is skewed to polar residues; the sequence is THISPNLHPFSSS. A bHLH domain is found at 122 to 171; the sequence is SNAQDHILAERKRREKLTQRFVALSALIPGLKKMDKASVLGDAIKHIKYL. A disordered region spans residues 201-224; sequence DENHQPSSSSSSDGNRNSSSSNLP. The segment covering 207 to 222 has biased composition (low complexity); sequence SSSSSSDGNRNSSSSN.

In terms of assembly, homodimer. Expressed in roots.

It is found in the nucleus. The polypeptide is Transcription factor bHLH18 (BHLH18) (Arabidopsis thaliana (Mouse-ear cress)).